The chain runs to 201 residues: Large ribosomal subunit protein bL25 (201 aa).

This sequence belongs to the bacterial ribosomal protein bL25 family. CTC subfamily. As to quaternary structure, part of the 50S ribosomal subunit; part of the 5S rRNA/L5/L18/L25 subcomplex. Contacts the 5S rRNA. Binds to the 5S rRNA independently of L5 and L18.

Its function is as follows. This is one of the proteins that binds to the 5S RNA in the ribosome where it forms part of the central protuberance. This chain is Large ribosomal subunit protein bL25, found in Ectopseudomonas mendocina (strain ymp) (Pseudomonas mendocina).